The sequence spans 189 residues: Small ribosomal subunit protein uS5 (189 aa).

In terms of domain architecture, S5 DRBM spans 22 to 85 (FVDKLVAINR…ESAKRDLIFV (64 aa)).

It belongs to the universal ribosomal protein uS5 family. As to quaternary structure, part of the 30S ribosomal subunit. Contacts proteins S4 and S8.

In terms of biological role, with S4 and S12 plays an important role in translational accuracy. Its function is as follows. Located at the back of the 30S subunit body where it stabilizes the conformation of the head with respect to the body. This Agrobacterium fabrum (strain C58 / ATCC 33970) (Agrobacterium tumefaciens (strain C58)) protein is Small ribosomal subunit protein uS5.